The following is a 97-amino-acid chain: Small ribosomal subunit protein bS20 (97 aa).

It belongs to the bacterial ribosomal protein bS20 family.

Binds directly to 16S ribosomal RNA. The protein is Small ribosomal subunit protein bS20 of Prochlorococcus marinus subsp. pastoris (strain CCMP1986 / NIES-2087 / MED4).